We begin with the raw amino-acid sequence, 176 residues long: Cell division protein ZapC (176 aa).

The protein belongs to the ZapC family. As to quaternary structure, interacts directly with FtsZ.

Its subcellular location is the cytoplasm. In terms of biological role, contributes to the efficiency of the cell division process by stabilizing the polymeric form of the cell division protein FtsZ. Acts by promoting interactions between FtsZ protofilaments and suppressing the GTPase activity of FtsZ. This is Cell division protein ZapC from Pseudoalteromonas translucida (strain TAC 125).